Here is a 243-residue protein sequence, read N- to C-terminus: Type III pantothenate kinase (243 aa).

6–13 (DIGNTVAK) lines the ATP pocket. Substrate is bound by residues tyrosine 86 and 93-96 (GYDR). The active-site Proton acceptor is the aspartate 95. K(+) is bound at residue aspartate 116. Residue threonine 119 coordinates ATP. Residue threonine 171 participates in substrate binding.

The protein belongs to the type III pantothenate kinase family. Homodimer. The cofactor is NH4(+). K(+) serves as cofactor.

It is found in the cytoplasm. It catalyses the reaction (R)-pantothenate + ATP = (R)-4'-phosphopantothenate + ADP + H(+). The protein operates within cofactor biosynthesis; coenzyme A biosynthesis; CoA from (R)-pantothenate: step 1/5. Its function is as follows. Catalyzes the phosphorylation of pantothenate (Pan), the first step in CoA biosynthesis. This chain is Type III pantothenate kinase, found in Bacteroides fragilis (strain YCH46).